The sequence spans 585 residues: Proline--tRNA ligase (585 aa).

Residue K173 forms an Isoglutamyl lysine isopeptide (Lys-Gln) (interchain with Q-Cter in protein Pup) linkage.

This sequence belongs to the class-II aminoacyl-tRNA synthetase family. ProS type 1 subfamily. Homodimer.

It is found in the cytoplasm. The catalysed reaction is tRNA(Pro) + L-proline + ATP = L-prolyl-tRNA(Pro) + AMP + diphosphate. Its function is as follows. Catalyzes the attachment of proline to tRNA(Pro) in a two-step reaction: proline is first activated by ATP to form Pro-AMP and then transferred to the acceptor end of tRNA(Pro). As ProRS can inadvertently accommodate and process non-cognate amino acids such as alanine and cysteine, to avoid such errors it has two additional distinct editing activities against alanine. One activity is designated as 'pretransfer' editing and involves the tRNA(Pro)-independent hydrolysis of activated Ala-AMP. The other activity is designated 'posttransfer' editing and involves deacylation of mischarged Ala-tRNA(Pro). The misacylated Cys-tRNA(Pro) is not edited by ProRS. This chain is Proline--tRNA ligase (proS), found in Mycolicibacterium smegmatis (strain ATCC 700084 / mc(2)155) (Mycobacterium smegmatis).